A 72-amino-acid polypeptide reads, in one-letter code: Alpha-elapitoxin-Dpp2c (72 aa).

Intrachain disulfides connect cysteine 3-cysteine 21, cysteine 14-cysteine 42, cysteine 27-cysteine 31, cysteine 46-cysteine 57, and cysteine 58-cysteine 63.

It belongs to the three-finger toxin family. Long-chain subfamily. Type II alpha-neurotoxin sub-subfamily. As to expression, expressed by the venom gland.

It localises to the secreted. In terms of biological role, binds with high affinity to muscular (alpha-1/CHRNA1) and neuronal (alpha-7/CHRNA7) nicotinic acetylcholine receptor (nAChR) and inhibits acetylcholine from binding to the receptor, thereby impairing neuromuscular and neuronal transmission. The protein is Alpha-elapitoxin-Dpp2c of Dendroaspis polylepis polylepis (Black mamba).